Here is a 213-residue protein sequence, read N- to C-terminus: GTP cyclohydrolase 1 (213 aa).

Residues 1 to 27 (MDDVVKSLLQRTTSSLTKPAPARPSRE) are disordered. Cys100, His103, and Cys172 together coordinate Zn(2+).

Belongs to the GTP cyclohydrolase I family. As to quaternary structure, homomer.

The enzyme catalyses GTP + H2O = 7,8-dihydroneopterin 3'-triphosphate + formate + H(+). It functions in the pathway cofactor biosynthesis; 7,8-dihydroneopterin triphosphate biosynthesis; 7,8-dihydroneopterin triphosphate from GTP: step 1/1. The sequence is that of GTP cyclohydrolase 1 from Beijerinckia indica subsp. indica (strain ATCC 9039 / DSM 1715 / NCIMB 8712).